The sequence spans 245 residues: Probable phosphatase YcdX (245 aa).

Zn(2+) contacts are provided by His7, His9, His15, His40, Glu73, His101, His131, Asp192, and His194.

It belongs to the PHP family. In terms of assembly, homotrimer. Zn(2+) is required as a cofactor.

The sequence is that of Probable phosphatase YcdX from Escherichia coli O17:K52:H18 (strain UMN026 / ExPEC).